The primary structure comprises 678 residues: NADPH--cytochrome P450 reductase (678 aa).

Residues 1–21 (MADSNMDAGTTTSEMVAEEVS) lie on the Lumenal side of the membrane. A helical membrane pass occupies residues 22 to 42 (LFSTTDVILFSLIVGVMTYWF). The Cytoplasmic segment spans residues 43–678 (LFRKKKEEVP…KGRYSLDVWS (636 aa)). Position 63 is a phosphoserine (serine 63). One can recognise a Flavodoxin-like domain in the interval 80–224 (IIVFYGSQTG…DFITWREQFW (145 aa)). Residues 86–91 (SQTGTA), 138–141 (ATYG), 173–182 (LGNKTYEHFN), and aspartate 208 contribute to the FMN site. The region spanning 279-521 (KNPFLAVVTT…YVRKSQFRLP (243 aa)) is the FAD-binding FR-type domain. Position 298 (arginine 298) interacts with NADP(+). FAD is bound by residues arginine 424, 454–457 (RYYS), 472–474 (CAV), tyrosine 478, and 488–491 (GVAT). Residues threonine 535, 596-597 (SR), 602-606 (KVYVQ), and aspartate 639 each bind NADP(+). Residue tryptophan 677 coordinates FAD.

This sequence belongs to the NADPH--cytochrome P450 reductase family. It in the N-terminal section; belongs to the flavodoxin family. In the C-terminal section; belongs to the flavoprotein pyridine nucleotide cytochrome reductase family. FAD serves as cofactor. FMN is required as a cofactor.

The protein resides in the endoplasmic reticulum membrane. It carries out the reaction 2 oxidized [cytochrome P450] + NADPH = 2 reduced [cytochrome P450] + NADP(+) + H(+). In terms of biological role, this enzyme is required for electron transfer from NADP to cytochrome P450 in microsomes. It can also provide electron transfer to heme oxygenase and cytochrome B5. This chain is NADPH--cytochrome P450 reductase, found in Bos taurus (Bovine).